The chain runs to 153 residues: Bacteriohemerythrin (153 aa).

7 residues coordinate Fe cation: His-21, His-57, Glu-61, His-76, His-80, His-115, and Asp-120.

Belongs to the hemerythrin family. As to quaternary structure, monomer.

Its function is as follows. Oxygen-binding protein. May be involved in a storage mechanism or for delivery to oxygen-requiring enzymes. The oxygen-binding site contains two iron atoms. The sequence is that of Bacteriohemerythrin from Pseudomonas paraeruginosa (strain DSM 24068 / PA7) (Pseudomonas aeruginosa (strain PA7)).